The following is an 813-amino-acid chain: ATP-dependent zinc metalloprotease FTSH 10, mitochondrial (813 aa).

Residues 1 to 86 (MIFSKLGSSL…FANPRLRRFF (86 aa)) constitute a mitochondrion transit peptide. The segment at 93-129 (KKNYENYYPKDSKKAPKNEQKSESRDGSKKNENENAG) is disordered. Over residues 94–125 (KNYENYYPKDSKKAPKNEQKSESRDGSKKNEN) the composition is skewed to basic and acidic residues. Residues 139 to 157 (MLIPLMAIALILSTFSLGS) traverse the membrane as a helical segment. An ATP-binding site is contributed by 367–374 (GPPGTGKT). Histidine 592 provides a ligand contact to Zn(2+). Glutamate 593 is an active-site residue. Residues histidine 596 and aspartate 668 each contribute to the Zn(2+) site. A compositionally biased stretch (basic and acidic residues) spans 764–790 (RPFKSGETTNYDRFKSGFEESEKESQK). Residues 764-813 (RPFKSGETTNYDRFKSGFEESEKESQKESVPVKPVEDDGIPPLEPQVVPT) are disordered.

This sequence in the N-terminal section; belongs to the AAA ATPase family. The protein in the C-terminal section; belongs to the peptidase M41 family. Zn(2+) serves as cofactor.

Its subcellular location is the mitochondrion inner membrane. Its function is as follows. Probable ATP-dependent zinc metallopeptidase. Involved in the assembly and/or stability of the complexes I and V of the mitochondrial oxidative phosphorylation system. This chain is ATP-dependent zinc metalloprotease FTSH 10, mitochondrial (FTSH10), found in Arabidopsis thaliana (Mouse-ear cress).